The following is a 455-amino-acid chain: Fumarate hydratase class II (455 aa).

Substrate contacts are provided by residues 96-98 (SGT), 122-125 (HPND), 132-134 (SSN), and threonine 180. The active-site Proton donor/acceptor is histidine 181. The active site involves serine 311. Substrate is bound by residues serine 312 and 317–319 (KVN).

It belongs to the class-II fumarase/aspartase family. Fumarase subfamily. In terms of assembly, homotetramer.

The protein resides in the cytoplasm. The catalysed reaction is (S)-malate = fumarate + H2O. Its pathway is carbohydrate metabolism; tricarboxylic acid cycle; (S)-malate from fumarate: step 1/1. Involved in the TCA cycle. Catalyzes the stereospecific interconversion of fumarate to L-malate. This Listeria monocytogenes serotype 4b (strain F2365) protein is Fumarate hydratase class II.